The primary structure comprises 338 residues: Nucleoid-associated protein CGSHiGG_07705 (338 aa).

It belongs to the YejK family.

The protein resides in the cytoplasm. It localises to the nucleoid. The protein is Nucleoid-associated protein CGSHiGG_07705 of Haemophilus influenzae (strain PittGG).